The sequence spans 539 residues: Inosine-5'-monophosphate dehydrogenase (539 aa).

CBS domains lie at 140–196 and 200–257; these read IIVN…DMPI and MTRE…PRAC. NAD(+)-binding positions include Asp292 and 343–345; that span reads GIG. Residues Gly345 and Gly347 each coordinate K(+). Ser348 provides a ligand contact to IMP. Position 350 (Cys350) interacts with K(+). Catalysis depends on Cys350, which acts as the Thioimidate intermediate. Residues 383–385, 406–407, and 430–434 each bind IMP; these read DGG, GS, and YRGMG. The Proton acceptor role is filled by Arg446. Residue Glu460 coordinates IMP. K(+) is bound by residues Glu514 and His516. Residues 517 to 539 form a disordered region; sequence PHDIAITQEAPNYSPDVHSGDAG.

The protein belongs to the IMPDH/GMPR family. In terms of assembly, homotetramer. The cofactor is K(+).

The enzyme catalyses IMP + NAD(+) + H2O = XMP + NADH + H(+). The protein operates within purine metabolism; XMP biosynthesis via de novo pathway; XMP from IMP: step 1/1. With respect to regulation, mycophenolic acid (MPA) is a non-competitive inhibitor that prevents formation of the closed enzyme conformation by binding to the same site as the amobile flap. In contrast, mizoribine monophosphate (MZP) is a competitive inhibitor that induces the closed conformation. MPA is a potent inhibitor of mammalian IMPDHs but a poor inhibitor of the bacterial enzymes. MZP is a more potent inhibitor of bacterial IMPDH. Functionally, catalyzes the conversion of inosine 5'-phosphate (IMP) to xanthosine 5'-phosphate (XMP), the first committed and rate-limiting step in the de novo synthesis of guanine nucleotides, and therefore plays an important role in the regulation of cell growth. The chain is Inosine-5'-monophosphate dehydrogenase from Rhodopirellula baltica (strain DSM 10527 / NCIMB 13988 / SH1).